Consider the following 423-residue polypeptide: Serine hydroxymethyltransferase (423 aa).

(6S)-5,6,7,8-tetrahydrofolate contacts are provided by residues L121 and 125-127; that span reads GHL. Residue K230 is modified to N6-(pyridoxal phosphate)lysine. 355–357 is a binding site for (6S)-5,6,7,8-tetrahydrofolate; that stretch reads SPF.

Belongs to the SHMT family. In terms of assembly, homodimer. Pyridoxal 5'-phosphate serves as cofactor.

Its subcellular location is the cytoplasm. The catalysed reaction is (6R)-5,10-methylene-5,6,7,8-tetrahydrofolate + glycine + H2O = (6S)-5,6,7,8-tetrahydrofolate + L-serine. It functions in the pathway one-carbon metabolism; tetrahydrofolate interconversion. It participates in amino-acid biosynthesis; glycine biosynthesis; glycine from L-serine: step 1/1. Functionally, catalyzes the reversible interconversion of serine and glycine with tetrahydrofolate (THF) serving as the one-carbon carrier. This reaction serves as the major source of one-carbon groups required for the biosynthesis of purines, thymidylate, methionine, and other important biomolecules. Also exhibits THF-independent aldolase activity toward beta-hydroxyamino acids, producing glycine and aldehydes, via a retro-aldol mechanism. The polypeptide is Serine hydroxymethyltransferase (Hydrogenovibrio crunogenus (strain DSM 25203 / XCL-2) (Thiomicrospira crunogena)).